Here is a 310-residue protein sequence, read N- to C-terminus: tRNA uridine(34) hydroxylase (310 aa).

The region spanning 124 to 218 (SDPEVLLIDT…YFEEVPQEES (95 aa)) is the Rhodanese domain. Cysteine 178 functions as the Cysteine persulfide intermediate in the catalytic mechanism.

This sequence belongs to the TrhO family.

It carries out the reaction uridine(34) in tRNA + AH2 + O2 = 5-hydroxyuridine(34) in tRNA + A + H2O. Its function is as follows. Catalyzes oxygen-dependent 5-hydroxyuridine (ho5U) modification at position 34 in tRNAs. In Pseudomonas putida (strain ATCC 47054 / DSM 6125 / CFBP 8728 / NCIMB 11950 / KT2440), this protein is tRNA uridine(34) hydroxylase.